The primary structure comprises 80 residues: Putative membrane protein insertion efficiency factor (80 aa).

It belongs to the UPF0161 family.

Its subcellular location is the cell membrane. Its function is as follows. Could be involved in insertion of integral membrane proteins into the membrane. This chain is Putative membrane protein insertion efficiency factor, found in Limosilactobacillus fermentum (strain NBRC 3956 / LMG 18251) (Lactobacillus fermentum).